A 333-amino-acid chain; its full sequence is Ketol-acid reductoisomerase (NADP(+)) (333 aa).

In terms of domain architecture, KARI N-terminal Rossmann spans 1 to 179 (MFYDDDADLS…GGTRAGVIKT (179 aa)). Residues 22-25 (YGSQ), K45, S48, S50, and 80-83 (DTAQ) each bind NADP(+). H105 is an active-site residue. Residue G131 coordinates NADP(+). The 146-residue stretch at 180–325 (TFKDETETDL…KKLRDLMSWV (146 aa)) folds into the KARI C-terminal knotted domain. The Mg(2+) site is built by D188, E192, E224, and E228. Position 249 (S249) interacts with substrate.

It belongs to the ketol-acid reductoisomerase family. Mg(2+) serves as cofactor.

It catalyses the reaction (2R)-2,3-dihydroxy-3-methylbutanoate + NADP(+) = (2S)-2-acetolactate + NADPH + H(+). It carries out the reaction (2R,3R)-2,3-dihydroxy-3-methylpentanoate + NADP(+) = (S)-2-ethyl-2-hydroxy-3-oxobutanoate + NADPH + H(+). It functions in the pathway amino-acid biosynthesis; L-isoleucine biosynthesis; L-isoleucine from 2-oxobutanoate: step 2/4. The protein operates within amino-acid biosynthesis; L-valine biosynthesis; L-valine from pyruvate: step 2/4. Functionally, involved in the biosynthesis of branched-chain amino acids (BCAA). Catalyzes an alkyl-migration followed by a ketol-acid reduction of (S)-2-acetolactate (S2AL) to yield (R)-2,3-dihydroxy-isovalerate. In the isomerase reaction, S2AL is rearranged via a Mg-dependent methyl migration to produce 3-hydroxy-3-methyl-2-ketobutyrate (HMKB). In the reductase reaction, this 2-ketoacid undergoes a metal-dependent reduction by NADPH to yield (R)-2,3-dihydroxy-isovalerate. This Mycobacterium ulcerans (strain Agy99) protein is Ketol-acid reductoisomerase (NADP(+)).